We begin with the raw amino-acid sequence, 122 residues long: Transcription initiation factor IIA subunit 2 (122 aa).

Phosphoserine is present on residues Ser-95 and Ser-102.

This sequence belongs to the TFIIA subunit 2 family. TFIIA is a heterodimer composed of the large TOA1 and a small TOA2 subunits. Interacts with TBP. Interacts with TAF11. Interacts with KAP122.

It is found in the cytoplasm. The protein localises to the nucleus. In terms of biological role, TFIIA is a component of the transcription machinery of RNA polymerase II and plays an important role in transcriptional activation. TFIIA in a complex with TBP mediates transcriptional activity. This chain is Transcription initiation factor IIA subunit 2 (TOA2), found in Saccharomyces cerevisiae (strain ATCC 204508 / S288c) (Baker's yeast).